We begin with the raw amino-acid sequence, 215 residues long: Transmembrane emp24 domain-containing protein 11 (215 aa).

The N-terminal stretch at 1 to 17 (MQIQTILLCFSFSFSAA) is a signal peptide. Over 18-167 (FYFHAGEREE…ILKEQDYQRD (150 aa)) the chain is Lumenal. A GOLD domain is found at 27–125 (EKCIIEDIPS…KLRIHLDIRV (99 aa)). Residue Asn105 is glycosylated (N-linked (GlcNAc...) asparagine). The stretch at 136–171 (QAKDKVNEVTFKLQHLIEQVEQILKEQDYQRDREEN) forms a coiled coil. The helical transmembrane segment at 168 to 185 (REENFRITSEDTNRNVLW) threads the bilayer. The Cytoplasmic portion of the chain corresponds to 186 to 215 (WAFAQILIFISVGIFQMKHLKDFFIAKKLV). The COPII vesicle coat-binding motif lies at 208 to 209 (FF). A COPI vesicle coat-binding motif is present at residues 208-215 (FFIAKKLV).

The protein belongs to the EMP24/GP25L family.

It localises to the endoplasmic reticulum membrane. Part of a complex whose function is to bind Ca(2+) to the ER membrane and thereby regulate the retention of ER resident proteins. The polypeptide is Transmembrane emp24 domain-containing protein 11 (Tmed11) (Mus musculus (Mouse)).